The primary structure comprises 539 residues: Histone-arginine methyltransferase CARMER (539 aa).

One can recognise an SAM-dependent MTase PRMT-type domain in the interval 149-458; that stretch reads ASQYFQFYGY…QSYDVTIDLH (310 aa). Residues glutamine 162, arginine 171, glycine 195, glutamate 217, glutamate 246, and threonine 274 each contribute to the S-adenosyl-L-methionine site. Arginine 509 bears the Asymmetric dimethylarginine; by autocatalysis mark.

Belongs to the class I-like SAM-binding methyltransferase superfamily. Protein arginine N-methyltransferase family. In terms of assembly, homodimer. The dimethylated protein is the major form.

The protein resides in the cytoplasm. The protein localises to the nucleus. The catalysed reaction is L-arginyl-[protein] + 2 S-adenosyl-L-methionine = N(omega),N(omega)-dimethyl-L-arginyl-[protein] + 2 S-adenosyl-L-homocysteine + 2 H(+). Its function is as follows. Methylates (mono- and asymmetric dimethylation) the guanidino nitrogens of arginyl residues in proteins. May methylate histone H3 at 'Arg-17' and activate transcription via chromatin remodeling. In Drosophila mojavensis (Fruit fly), this protein is Histone-arginine methyltransferase CARMER (Art4).